Here is a 224-residue protein sequence, read N- to C-terminus: Myogenin (224 aa).

A phosphoserine; by CaMK2G mark is found at Ser-77 and Ser-79. Positions 81–132 (DRRRAATLREKRRLKKVNEAFEALKRSTLLNPNQRLPKVEILRSAIQYIERL) constitute a bHLH domain. Thr-87 carries the phosphothreonine; by CaMK2G modification.

Homodimer and heterodimer with E12; heterodimerization enhances MYOG DNA-binding and transcriptional activities. Interacts with SMARCA4/BRG1/BAF190A. Interacts (via C-terminal region) with SSRP1 and SUPT16H; the interaction is indicative of an interaction with the FACT complex. Interacts with CSRP3. Post-translationally, phosphorylated by CAMK2G on threonine and serine amino acids in a muscle activity-dependent manner. Phosphorylation of Thr-87 impairs both DNA-binding and trans-activation functions in contracting muscles.

The protein localises to the nucleus. Its function is as follows. Acts as a transcriptional activator that promotes transcription of muscle-specific target genes and plays a role in muscle differentiation, cell cycle exit and muscle atrophy. Essential for the development of functional embryonic skeletal fiber muscle differentiation. However is dispensable for postnatal skeletal muscle growth; phosphorylation by CAMK2G inhibits its transcriptional activity in respons to muscle activity. Required for the recruitment of the FACT complex to muscle-specific promoter regions, thus promoting gene expression initiation. During terminal myoblast differentiation, plays a role as a strong activator of transcription at loci with an open chromatin structure previously initiated by MYOD1. Together with MYF5 and MYOD1, co-occupies muscle-specific gene promoter core regions during myogenesis. Also cooperates with myocyte-specific enhancer factor MEF2D and BRG1-dependent recruitment of SWI/SNF chromatin-remodeling enzymes to alter chromatin structure at myogenic late gene promoters. Facilitates cell cycle exit during terminal muscle differentiation through the up-regulation of miR-20a expression, which in turn represses genes involved in cell cycle progression. Binds to the E-box containing (E1) promoter region of the miR-20a gene. Also plays a role in preventing reversal of muscle cell differentiation. Contributes to the atrophy-related gene expression in adult denervated muscles. Induces fibroblasts to differentiate into myoblasts. The sequence is that of Myogenin (MYOG) from Bos taurus (Bovine).